Here is a 585-residue protein sequence, read N- to C-terminus: Bestrophin-1 (585 aa).

The Cytoplasmic segment spans residues 1–31 (MTITYTSQVANARLGSFSRLLLCWRGSIYKL). Ala-10 serves as a coordination point for Ca(2+). A helical membrane pass occupies residues 32–51 (LYGEFLIFLLCYYIIRFIYR). At 52–60 (LALTEEQQL) the chain is on the extracellular side. A helical transmembrane segment spans residues 61–82 (MFEKLTLYCDSYIQLIPISFVL). Residues 83 to 237 (GFYVTLVVTR…DWISIPLVYT (155 aa)) lie on the Cytoplasmic side of the membrane. The helical transmembrane segment at 238–255 (QVVTVAVYSFFLTCLVGR) threads the bilayer. At 256-274 (QFLNPAKAYPGHELDLVVP) the chain is on the extracellular side. Residues 275–288 (VFTFLQFFFYVGWL) traverse the membrane as a helical segment. The Cytoplasmic portion of the chain corresponds to 289–585 (KVAEQLINPF…ALENRDEAHS (297 aa)). Ca(2+) contacts are provided by Gln-293, Asn-296, Asp-301, and Asp-304. The auto-inhibitory segment stretch occupies residues 346–379 (PYTAASAQFRRASFMGSTFNISLNKEEMEFQPNQ).

Belongs to the anion channel-forming bestrophin (TC 1.A.46) family. Calcium-sensitive chloride channel subfamily. As to quaternary structure, interacts with YWHAG; this interaction promotes the ligand-gated L-glutamate channel activity leading to the positive regulation of NMDA glutamate receptor activity through the L-glutamate secretion. In terms of tissue distribution, predominantly expressed in the basolateral membrane of the retinal pigment epithelium.

Its subcellular location is the cell membrane. It localises to the basolateral cell membrane. It carries out the reaction chloride(in) = chloride(out). It catalyses the reaction hydrogencarbonate(in) = hydrogencarbonate(out). The catalysed reaction is 4-aminobutanoate(in) = 4-aminobutanoate(out). The enzyme catalyses L-glutamate(out) = L-glutamate(in). With respect to regulation, inactivated by sulfhydryl-reactive agents. Ligand-gated anion channel that allows the movement of anions across cell membranes when activated by calcium (Ca2+). Allows the movement of chloride and hydrogencarbonate. Found in a partially open conformation leading to significantly smaller chloride movement. Upon F2R/PAR-1 activation, the sequestered calcium is released into the cytosol of astrocytes, leading to the (Ca2+)-dependent release of L-glutamate into the synaptic cleft that targets the neuronal postsynaptic GRIN2A/NMDAR receptor resulting in the synaptic plasticity regulation. Upon activation of the norepinephrine-alpha-1 adrenergic receptor signaling pathway, transports as well D-serine than L-glutamate in a (Ca2+)-dependent manner, leading to activation of adjacent NMDAR receptors and therefore regulates the heterosynaptic long-term depression and metaplasticity during initial memory acquisition. Releases the 4-aminobutanoate neurotransmitter in a (Ca2+)-dependent manner, and participates in its tonic release from cerebellar glial cells. This Homo sapiens (Human) protein is Bestrophin-1.